A 1212-amino-acid polypeptide reads, in one-letter code: DNA-directed RNA polymerase subunit beta'' (1212 aa).

C229, C302, C309, and C312 together coordinate Zn(2+). A disordered region spans residues 1162-1212 (QKETSKNKKETSKNKKETSKNKKETSKNKKETSKNKKETSKNKKEASKNKK).

The protein belongs to the RNA polymerase beta' chain family. RpoC2 subfamily. In terms of assembly, in plastids the minimal PEP RNA polymerase catalytic core is composed of four subunits: alpha, beta, beta', and beta''. When a (nuclear-encoded) sigma factor is associated with the core the holoenzyme is formed, which can initiate transcription. Requires Zn(2+) as cofactor.

It is found in the plastid. The protein resides in the chloroplast. It carries out the reaction RNA(n) + a ribonucleoside 5'-triphosphate = RNA(n+1) + diphosphate. DNA-dependent RNA polymerase catalyzes the transcription of DNA into RNA using the four ribonucleoside triphosphates as substrates. The polypeptide is DNA-directed RNA polymerase subunit beta'' (Cryptomeria japonica (Japanese cedar)).